The primary structure comprises 75 residues: ATP synthase subunit c (75 aa).

2 consecutive transmembrane segments (helical) span residues 8-28 and 54-74; these read FLGI…VSNI and AALT…LIFV.

This sequence belongs to the ATPase C chain family. F-type ATPases have 2 components, F(1) - the catalytic core - and F(0) - the membrane proton channel. F(1) has five subunits: alpha(3), beta(3), gamma(1), delta(1), epsilon(1). F(0) has three main subunits: a(1), b(2) and c(10-14). The alpha and beta chains form an alternating ring which encloses part of the gamma chain. F(1) is attached to F(0) by a central stalk formed by the gamma and epsilon chains, while a peripheral stalk is formed by the delta and b chains.

It localises to the cell inner membrane. In terms of biological role, f(1)F(0) ATP synthase produces ATP from ADP in the presence of a proton or sodium gradient. F-type ATPases consist of two structural domains, F(1) containing the extramembraneous catalytic core and F(0) containing the membrane proton channel, linked together by a central stalk and a peripheral stalk. During catalysis, ATP synthesis in the catalytic domain of F(1) is coupled via a rotary mechanism of the central stalk subunits to proton translocation. Functionally, key component of the F(0) channel; it plays a direct role in translocation across the membrane. A homomeric c-ring of between 10-14 subunits forms the central stalk rotor element with the F(1) delta and epsilon subunits. The sequence is that of ATP synthase subunit c from Neorickettsia sennetsu (strain ATCC VR-367 / Miyayama) (Ehrlichia sennetsu).